Consider the following 158-residue polypeptide: Dysbindin domain-containing protein 1 (158 aa).

Residues methionine 1–methionine 38 form a disordered region. Phosphoserine occurs at positions 95 and 119. A disordered region spans residues aspartate 96–aspartate 158. The span at threonine 125 to arginine 141 shows a compositional bias: basic and acidic residues.

It belongs to the dysbindin family.

The polypeptide is Dysbindin domain-containing protein 1 (DBNDD1) (Bos taurus (Bovine)).